A 259-amino-acid polypeptide reads, in one-letter code: Phosphatidylserine decarboxylase proenzyme (259 aa).

Active-site charge relay system; for autoendoproteolytic cleavage activity residues include Asp86, His142, and Ser226. Ser226 serves as the catalytic Schiff-base intermediate with substrate; via pyruvic acid; for decarboxylase activity. Ser226 bears the Pyruvic acid (Ser); by autocatalysis mark.

It belongs to the phosphatidylserine decarboxylase family. PSD-B subfamily. Prokaryotic type I sub-subfamily. Heterodimer of a large membrane-associated beta subunit and a small pyruvoyl-containing alpha subunit. Requires pyruvate as cofactor. Is synthesized initially as an inactive proenzyme. Formation of the active enzyme involves a self-maturation process in which the active site pyruvoyl group is generated from an internal serine residue via an autocatalytic post-translational modification. Two non-identical subunits are generated from the proenzyme in this reaction, and the pyruvate is formed at the N-terminus of the alpha chain, which is derived from the carboxyl end of the proenzyme. The autoendoproteolytic cleavage occurs by a canonical serine protease mechanism, in which the side chain hydroxyl group of the serine supplies its oxygen atom to form the C-terminus of the beta chain, while the remainder of the serine residue undergoes an oxidative deamination to produce ammonia and the pyruvoyl prosthetic group on the alpha chain. During this reaction, the Ser that is part of the protease active site of the proenzyme becomes the pyruvoyl prosthetic group, which constitutes an essential element of the active site of the mature decarboxylase.

The protein localises to the cell membrane. It carries out the reaction a 1,2-diacyl-sn-glycero-3-phospho-L-serine + H(+) = a 1,2-diacyl-sn-glycero-3-phosphoethanolamine + CO2. Its pathway is phospholipid metabolism; phosphatidylethanolamine biosynthesis; phosphatidylethanolamine from CDP-diacylglycerol: step 2/2. In terms of biological role, catalyzes the formation of phosphatidylethanolamine (PtdEtn) from phosphatidylserine (PtdSer). The chain is Phosphatidylserine decarboxylase proenzyme from Halalkalibacterium halodurans (strain ATCC BAA-125 / DSM 18197 / FERM 7344 / JCM 9153 / C-125) (Bacillus halodurans).